Here is a 1521-residue protein sequence, read N- to C-terminus: Lysophospholipase NTE1 (1521 aa).

Residues 1-50 (MDVVNSTARAAVTSATAVTAVTGTGDRHPNPLSSAVAAASDVANAHGSSS) lie on the Cytoplasmic side of the membrane. Residues 51–71 (WLGLFARVVLWLLQFVSMVLY) traverse the membrane as a helical segment. Residues 72 to 96 (YAIKLATISVPTLLYTLFSTSLTVT) lie on the Lumenal side of the membrane. A helical transmembrane segment spans residues 97 to 117 (MNATTLMLIVAAMIGAISWVV). The Cytoplasmic portion of the chain corresponds to 118–1521 (RYRYLNMYSR…RTMAPRRASI (1404 aa)). 3 disordered regions span residues 280-301 (HADEDNSEPGTTTHSGLFPNYP), 315-372 (SVPN…SAHP), and 738-768 (HAMDSAQSIRSPQRSPQPFAESMRSGNKVDD). Composition is skewed to polar residues over residues 316-334 (VPNTPQMDASASSSANNLP) and 738-753 (HAMDSAQSIRSPQRSP). A nucleoside 3',5'-cyclic phosphate is bound by residues 670-789 (PASP…GGLA) and 837-957 (RLTN…IASR). Positions 1217-1381 (LVLGGGGARG…VDNLTVSHMK (165 aa)) constitute a PNPLA domain. Positions 1221–1226 (GGGARG) match the GXGXXG motif. A GXSXG motif is present at residues 1248 to 1252 (GTSIG). Ser-1250 functions as the Nucleophile in the catalytic mechanism. The active-site Proton acceptor is the Asp-1368. Residues 1368–1370 (DGG) carry the DGA/G motif.

It belongs to the NTE family.

The protein resides in the endoplasmic reticulum membrane. The enzyme catalyses a 1-acyl-sn-glycero-3-phosphocholine + H2O = sn-glycerol 3-phosphocholine + a fatty acid + H(+). Inhibited by organophosphorus esters. Its function is as follows. Intracellular phospholipase B that catalyzes the double deacylation of phosphatidylcholine (PC) to glycerophosphocholine (GroPCho). Plays an important role in membrane lipid homeostasis. Responsible for the rapid PC turnover in response to inositol, elevated temperatures, or when choline is present in the growth medium. The chain is Lysophospholipase NTE1 (NTE1) from Chaetomium globosum (strain ATCC 6205 / CBS 148.51 / DSM 1962 / NBRC 6347 / NRRL 1970) (Soil fungus).